We begin with the raw amino-acid sequence, 61 residues long: Large ribosomal subunit protein uL30 (61 aa).

The protein belongs to the universal ribosomal protein uL30 family. Part of the 50S ribosomal subunit.

The sequence is that of Large ribosomal subunit protein uL30 from Chlorobium phaeobacteroides (strain BS1).